We begin with the raw amino-acid sequence, 505 residues long: Keratin, type II cuticular Hb1 (505 aa).

The interval 1-106 (MTCGSGFGGR…PNAQCVKQEE (106 aa)) is head. The IF rod domain occupies 106–417 (EKEQIKSLNS…RLLEGEEQRL (312 aa)). Residues 107–141 (KEQIKSLNSRFAAFIDKVRFLEQQNKLLETKLQFY) are coil 1A. Residues 142 to 151 (QNRECCQSNL) form a linker 1 region. The coil 1B stretch occupies residues 152–252 (EPLFEGYIET…YEEEILILQS (101 aa)). Lysine 212 participates in a covalent cross-link: Glycyl lysine isopeptide (Lys-Gly) (interchain with G-Cter in SUMO1). Residues 253-269 (HISDTSVVVKLDNSRDL) form a linker 12 region. A coil 2 region spans residues 270-413 (NMDCIIAEIK…ATYRRLLEGE (144 aa)). The tail stretch occupies residues 414 to 505 (EQRLCEGIGA…GSCGSSCRKC (92 aa)).

The protein belongs to the intermediate filament family. In terms of assembly, heterotetramer of two type I and two type II keratins. As to expression, abundantly expressed in the differentiating cortex of growing (anagen) hair. Expression is restricted to the keratinocytes of the hair cortex and is absent from inner root sheath and medulla. Expressed in malignant lymph node tissue in breast carcinoma tissue.

This is Keratin, type II cuticular Hb1 (KRT81) from Homo sapiens (Human).